The sequence spans 491 residues: Probable glycine dehydrogenase (decarboxylating) subunit 2 (491 aa).

Lys273 bears the N6-(pyridoxal phosphate)lysine mark.

Belongs to the GcvP family. C-terminal subunit subfamily. The glycine cleavage system is composed of four proteins: P, T, L and H. In this organism, the P 'protein' is a heterodimer of two subunits. The cofactor is pyridoxal 5'-phosphate.

The catalysed reaction is N(6)-[(R)-lipoyl]-L-lysyl-[glycine-cleavage complex H protein] + glycine + H(+) = N(6)-[(R)-S(8)-aminomethyldihydrolipoyl]-L-lysyl-[glycine-cleavage complex H protein] + CO2. Functionally, the glycine cleavage system catalyzes the degradation of glycine. The P protein binds the alpha-amino group of glycine through its pyridoxal phosphate cofactor; CO(2) is released and the remaining methylamine moiety is then transferred to the lipoamide cofactor of the H protein. In Bacillus velezensis (strain DSM 23117 / BGSC 10A6 / LMG 26770 / FZB42) (Bacillus amyloliquefaciens subsp. plantarum), this protein is Probable glycine dehydrogenase (decarboxylating) subunit 2.